The sequence spans 173 residues: Disulfide bond formation protein B (173 aa).

Residues 1–14 (MIEFLRRIAAHRLA) are Cytoplasmic-facing. The helical transmembrane segment at 15-31 (WSLLAASALFLELSALF) threads the bilayer. The Periplasmic segment spans residues 32 to 49 (FQHVLGLHPCVMCVYERI). Residues C41 and C44 are joined by a disulfide bond. The chain crosses the membrane as a helical span at residues 50–65 (ATLGVLTAGLLGMVAP). At 66–72 (QKWYVRW) the chain is on the cytoplasmic side. A helical transmembrane segment spans residues 73–90 (SALLLWGSSAFWGLKLAL). Residues 91-145 (KHVDYQVNPSPFNVCEGFVDFPSWAPLDQWIPWMFYPDGDCSEVTWQFLSFSMPQ) lie on the Periplasmic side of the membrane. A disulfide bond links C105 and C131. A helical membrane pass occupies residues 146–164 (WLVAIFAVYLLVFVVVAIG). Residues 165-173 (NLVKGRCCS) lie on the Cytoplasmic side of the membrane.

The protein belongs to the DsbB family.

The protein resides in the cell inner membrane. Functionally, required for disulfide bond formation in some periplasmic proteins. Acts by oxidizing the DsbA protein. This is Disulfide bond formation protein B from Aeromonas hydrophila subsp. hydrophila (strain ATCC 7966 / DSM 30187 / BCRC 13018 / CCUG 14551 / JCM 1027 / KCTC 2358 / NCIMB 9240 / NCTC 8049).